Reading from the N-terminus, the 415-residue chain is Serine hydroxymethyltransferase (415 aa).

(6S)-5,6,7,8-tetrahydrofolate contacts are provided by residues Leu-117 and 121–123; that span reads GHL. Lys-226 carries the N6-(pyridoxal phosphate)lysine modification.

This sequence belongs to the SHMT family. Homodimer. It depends on pyridoxal 5'-phosphate as a cofactor.

It is found in the cytoplasm. It catalyses the reaction (6R)-5,10-methylene-5,6,7,8-tetrahydrofolate + glycine + H2O = (6S)-5,6,7,8-tetrahydrofolate + L-serine. It participates in one-carbon metabolism; tetrahydrofolate interconversion. It functions in the pathway amino-acid biosynthesis; glycine biosynthesis; glycine from L-serine: step 1/1. Functionally, catalyzes the reversible interconversion of serine and glycine with tetrahydrofolate (THF) serving as the one-carbon carrier. This reaction serves as the major source of one-carbon groups required for the biosynthesis of purines, thymidylate, methionine, and other important biomolecules. Also exhibits THF-independent aldolase activity toward beta-hydroxyamino acids, producing glycine and aldehydes, via a retro-aldol mechanism. The protein is Serine hydroxymethyltransferase of Dehalococcoides mccartyi (strain CBDB1).